The following is a 226-amino-acid chain: Thiopurine S-methyltransferase (226 aa).

Residues W10, L47, E68, and R130 each contribute to the S-adenosyl-L-methionine site.

The protein belongs to the class I-like SAM-binding methyltransferase superfamily. TPMT family.

It localises to the cytoplasm. The catalysed reaction is S-adenosyl-L-methionine + a thiopurine = S-adenosyl-L-homocysteine + a thiopurine S-methylether.. This chain is Thiopurine S-methyltransferase, found in Shewanella sediminis (strain HAW-EB3).